Consider the following 345-residue polypeptide: MASKQHAHILSLARSMIPPLHPKLHKGQAGRIGVLGGSGDYSGAPYFSSMGAMRFGADLAHVICEPSAGAVIKTYSPDLIVHTILDPQKSREDIRSALKGVMSRLHVLIIGPGLGRDDHMQSCAKIAFELAKDMEQMGVVVDADGLWLVQNEPKVVMDWPGVPRIILTPNVMEFKRLCDTMKINASGPHTSLCPQLATALGNATIIQKGPSDIISNGLKIPSALLSDESEEQNYLEVKVEGGLKRVGGQGDILSGSTGVLLAWGSEWVRGTYEHVGHPPPQDKAIAENIPVLAAYGASTFNRTVSKRGFQKKGRSMVTGDLVDMVGEVYEEVFGKPGEMEGRGKL.

Positions 9–332 (ILSLARSMIP…DMVGEVYEEV (324 aa)) constitute a YjeF C-terminal domain. Residues glycine 113 and 170–176 (NVMEFKR) each bind (6S)-NADPHX. ATP is bound by residues 208–212 (KGPSD) and 241–250 (GGLKRVGGQG). Aspartate 251 is a binding site for (6S)-NADPHX.

It belongs to the NnrD/CARKD family. It depends on Mg(2+) as a cofactor.

The protein localises to the cytoplasm. The enzyme catalyses (6S)-NADHX + ATP = ADP + phosphate + NADH + H(+). It catalyses the reaction (6S)-NADPHX + ATP = ADP + phosphate + NADPH + H(+). Its function is as follows. Catalyzes the dehydration of the S-form of NAD(P)HX at the expense of ATP, which is converted to ADP. Together with NAD(P)HX epimerase, which catalyzes the epimerization of the S- and R-forms, the enzyme allows the repair of both epimers of NAD(P)HX, a damaged form of NAD(P)H that is a result of enzymatic or heat-dependent hydration. The chain is ATP-dependent (S)-NAD(P)H-hydrate dehydratase from Cryptococcus neoformans var. neoformans serotype D (strain JEC21 / ATCC MYA-565) (Filobasidiella neoformans).